The following is a 722-amino-acid chain: D-galactosyl-beta-1-&gt;4-L-rhamnose phosphorylase (722 aa).

Catalysis depends on D319, which acts as the Proton donor.

The protein belongs to the glycoside hydrolase 112 family.

The enzyme catalyses beta-D-galactosyl-(1-&gt;4)-L-rhamnose + phosphate = alpha-D-galactose 1-phosphate + L-rhamnopyranose. In terms of biological role, reversibly phosphorolyzes beta-D-galactosyl-(1-&gt;4)-L-rhamnose to form alpha-D-galactose 1-phosphate and L-rhamnose. Does not phosphorolyze galacto-N-biose or lacto-N-biose. In the reverse reaction, has the highest activity toward L-rhamnose, also has activity toward L-mannose, and low activity toward L-lyxose, D-glucose, 2-deoxy-D-glucose and D-galactose. The sequence is that of D-galactosyl-beta-1-&gt;4-L-rhamnose phosphorylase from Lachnoclostridium phytofermentans (strain ATCC 700394 / DSM 18823 / ISDg) (Clostridium phytofermentans).